The primary structure comprises 634 residues: Threonine--tRNA ligase (634 aa).

One can recognise a TGS domain in the interval 1-61; sequence MISLKFPNNE…SESGEFRLYT (61 aa). The interval 242–532 is catalytic; that stretch reads DHRKIGQELD…LIEHYAGAFP (291 aa). Positions 333, 384, and 509 each coordinate Zn(2+).

It belongs to the class-II aminoacyl-tRNA synthetase family. As to quaternary structure, homodimer. Zn(2+) is required as a cofactor.

The protein localises to the cytoplasm. It catalyses the reaction tRNA(Thr) + L-threonine + ATP = L-threonyl-tRNA(Thr) + AMP + diphosphate + H(+). Catalyzes the attachment of threonine to tRNA(Thr) in a two-step reaction: L-threonine is first activated by ATP to form Thr-AMP and then transferred to the acceptor end of tRNA(Thr). Also edits incorrectly charged L-seryl-tRNA(Thr). This is Threonine--tRNA ligase from Carboxydothermus hydrogenoformans (strain ATCC BAA-161 / DSM 6008 / Z-2901).